Reading from the N-terminus, the 213-residue chain is MVERTILEAVKKVIEESPKRNFSESVDLAINLKNLDMNQPKNRVDEEVILPHGLGKELKIGVFAKGDVGLRAKAAGAAYVISDVELEELAADKNKARVLANECDLFIAETQFMPIIGKNLGIVLGPRGKMPIPLMPNKDIGELIQSKQNAVKLRSKDRLTFHVAVGRRNMNPDDLSENIETIMSRLERVLDKGKHNLRSVYVTTTMGKSERVV.

It belongs to the universal ribosomal protein uL1 family. As to quaternary structure, part of the 50S ribosomal subunit.

Binds directly to 23S rRNA. Probably involved in E site tRNA release. Functionally, protein L1 is also a translational repressor protein, it controls the translation of its operon by binding to its mRNA. The polypeptide is Large ribosomal subunit protein uL1 (Methanosarcina mazei (strain ATCC BAA-159 / DSM 3647 / Goe1 / Go1 / JCM 11833 / OCM 88) (Methanosarcina frisia)).